Consider the following 316-residue polypeptide: Probable cell division protein WhiA (316 aa).

The segment at residues 275–309 (TLKELGEMVSGGKISKSGINHRLRKIDEIAEKLRA) is a DNA-binding region (H-T-H motif).

This sequence belongs to the WhiA family.

Functionally, involved in cell division and chromosome segregation. In Bacillus cereus (strain B4264), this protein is Probable cell division protein WhiA.